The primary structure comprises 471 residues: uncharacterized protein (471 aa).

Helical transmembrane passes span 48–68 (FISA…FTIV), 85–105 (LSGV…YPML), 123–140 (YTMS…YALA), 145–165 (SVAL…MFLY), 186–206 (VVNS…GGLM), 223–243 (SGNW…FACF), 277–297 (FVGC…YFLL), 320–340 (GNFL…FSYL), 349–369 (IILL…TIHY), 379–399 (FIIY…SVSL), 414–434 (VAVQ…GGAF), and 440–460 (VVFF…LLII).

It belongs to the major facilitator superfamily.

The protein resides in the golgi apparatus. It is found in the membrane. This is an uncharacterized protein from Schizosaccharomyces pombe (strain 972 / ATCC 24843) (Fission yeast).